Here is a 219-residue protein sequence, read N- to C-terminus: 3,4-dihydroxy-2-butanone 4-phosphate synthase (219 aa).

Residues R28–E29, D33, R140–T144, and E164 contribute to the D-ribulose 5-phosphate site. E29 is a binding site for Mg(2+). A Mg(2+)-binding site is contributed by H143.

This sequence belongs to the DHBP synthase family. Homodimer. Mg(2+) is required as a cofactor. Mn(2+) serves as cofactor.

The enzyme catalyses D-ribulose 5-phosphate = (2S)-2-hydroxy-3-oxobutyl phosphate + formate + H(+). Its pathway is cofactor biosynthesis; riboflavin biosynthesis; 2-hydroxy-3-oxobutyl phosphate from D-ribulose 5-phosphate: step 1/1. Catalyzes the conversion of D-ribulose 5-phosphate to formate and 3,4-dihydroxy-2-butanone 4-phosphate. In Methanocorpusculum labreanum (strain ATCC 43576 / DSM 4855 / Z), this protein is 3,4-dihydroxy-2-butanone 4-phosphate synthase.